Consider the following 664-residue polypeptide: Acetolactate synthase 2, chloroplastic (664 aa).

A compositionally biased stretch (low complexity) spans 1–34 (MAAAAAAPSPSFSKTLSSSSSKSSTLLPRSTFPF). A disordered region spans residues 1-51 (MAAAAAAPSPSFSKTLSSSSSKSSTLLPRSTFPFPHHPHKTTPPPLHLTPT). The transit peptide at 1-91 (MAAAAAAPSP…VSRFAPDEPR (91 aa)) directs the protein to the chloroplast. Residue E138 coordinates thiamine diphosphate. C158 and C304 are oxidised to a cystine. Residues R240, 346 to 367 (HGTV…FGVR), and 389 to 408 (DIDS…ICAD) contribute to the FAD site. Residues 481-561 (QHQMWAAQYY…VKIMLLNNQH (81 aa)) are thiamine pyrophosphate binding. Mg(2+) is bound by residues D532 and N559.

It belongs to the TPP enzyme family. Requires Mg(2+) as cofactor. The cofactor is thiamine diphosphate.

It localises to the plastid. Its subcellular location is the chloroplast. The catalysed reaction is 2 pyruvate + H(+) = (2S)-2-acetolactate + CO2. It functions in the pathway amino-acid biosynthesis; L-isoleucine biosynthesis; L-isoleucine from 2-oxobutanoate: step 1/4. The protein operates within amino-acid biosynthesis; L-valine biosynthesis; L-valine from pyruvate: step 1/4. In Nicotiana tabacum (Common tobacco), this protein is Acetolactate synthase 2, chloroplastic (ALS SURB).